We begin with the raw amino-acid sequence, 98 residues long: MLSRLQELRKEEETLLRLKAALHDQLNRLKVEELALQSMISSRRGDEMLSSHTVPEQSHDMLVHVDNEASINQTTLELSTKSHVTEEEEEEEEEESDS.

The span at 73-82 (QTTLELSTKS) shows a compositional bias: polar residues. Residues 73-98 (QTTLELSTKSHVTEEEEEEEEEESDS) are disordered. A Phosphothreonine modification is found at T85. Residues 86–98 (EEEEEEEEEESDS) show a composition bias toward acidic residues.

Part of the SNAPc complex composed of 5 subunits: SNAPC1, SNAPC2, SNAPC3, SNAPC4 and SNAPC5. SNAPC5 interacts with SNAPC4.

Its subcellular location is the nucleus. Part of the SNAPc complex required for the transcription of both RNA polymerase II and III small-nuclear RNA genes. Binds to the proximal sequence element (PSE), a non-TATA-box basal promoter element common to these 2 types of genes. Recruits TBP and BRF2 to the U6 snRNA TATA box. The protein is snRNA-activating protein complex subunit 5 (SNAPC5) of Homo sapiens (Human).